The sequence spans 241 residues: Small ribosomal subunit protein uS2 (241 aa).

The protein belongs to the universal ribosomal protein uS2 family.

The sequence is that of Small ribosomal subunit protein uS2 from Cronobacter sakazakii (strain ATCC BAA-894) (Enterobacter sakazakii).